The chain runs to 360 residues: Protein Wnt-2 (360 aa).

An N-terminal signal peptide occupies residues 1 to 25 (MNACLVGIWLWLPLLFTWLSPEVSS). Cystine bridges form between cysteine 76–cysteine 87, cysteine 127–cysteine 135, cysteine 137–cysteine 157, cysteine 206–cysteine 220, cysteine 208–cysteine 215, cysteine 278–cysteine 309, cysteine 294–cysteine 304, cysteine 308–cysteine 348, cysteine 324–cysteine 339, cysteine 326–cysteine 336, and cysteine 331–cysteine 332. Serine 212 carries O-palmitoleoyl serine; by PORCN lipidation. A glycan (N-linked (GlcNAc...) asparagine) is linked at asparagine 295.

Belongs to the Wnt family. Palmitoleoylation is required for efficient binding to frizzled receptors. Depalmitoleoylation leads to Wnt signaling pathway inhibition.

The protein resides in the secreted. It is found in the extracellular space. The protein localises to the extracellular matrix. Ligand for members of the frizzled family of seven transmembrane receptors. Probable developmental protein. May be a signaling molecule which affects the development of discrete regions of tissues. Is likely to signal over only few cell diameters. The polypeptide is Protein Wnt-2 (WNT2) (Muntiacus muntjak (Barking deer)).